The primary structure comprises 367 residues: Protein NDRG4-B (367 aa).

Over residues 1 to 12 (MSELRFPEEKPL) the composition is skewed to basic and acidic residues. Disordered regions lie at residues 1-21 (MSEL…TEME) and 333-367 (LTSA…EVSC). The span at 347 to 367 (CTQSESSDGIGQINHTMEVSC) shows a compositional bias: polar residues.

Belongs to the NDRG family.

It is found in the cytoplasm. The protein resides in the cytosol. Its function is as follows. Contributes to the maintenance of intracerebral BDNF levels within the normal range. May enhance growth factor-induced ERK1 and ERK2 phosphorylation. May attenuate growth factor-promoted ELK1 phosphorylation in a microtubule-dependent manner. The protein is Protein NDRG4-B (ndrg4-b) of Xenopus laevis (African clawed frog).